The following is a 175-amino-acid chain: Protein her-1 (175 aa).

A signal peptide spans 1–18 (MRYLPIFVFLGSFGYTET). N-linked (GlcNAc...) asparagine glycosylation is found at N98 and N163.

Its subcellular location is the secreted. In terms of biological role, dictates male development. Probably plays a direct role in cell signaling during C.elegans sex determination. Inhibits the function of tra-2a. This Caenorhabditis elegans protein is Protein her-1 (her-1).